We begin with the raw amino-acid sequence, 275 residues long: Expansin-A23 (275 aa).

The signal sequence occupies residues 1-27; the sequence is MNLLGKMIYVEGFMMIMATLLVSMSYG. One can recognise an Expansin-like EG45 domain in the interval 72–182; that stretch reads QGACGYGDLF…RRISCARTGG (111 aa). One can recognise an Expansin-like CBD domain in the interval 192 to 271; that stretch reads YFLMILPYNV…NWGFGQTFDG (80 aa).

It belongs to the expansin family. Expansin A subfamily.

The protein resides in the secreted. It is found in the cell wall. The protein localises to the membrane. Its function is as follows. Causes loosening and extension of plant cell walls by disrupting non-covalent bonding between cellulose microfibrils and matrix glucans. No enzymatic activity has been found. The polypeptide is Expansin-A23 (EXPA23) (Arabidopsis thaliana (Mouse-ear cress)).